The following is a 378-amino-acid chain: MSLSIADQNKLDAFWSYCVKNRYFNIGYPESADFDYTMLERFLRFSINNCGDWGEYCNYLLNSFDFEKEVMEYFSGIFKIPFAESWGYVTNGGTESNMFGCYLGRELFPEGTLYYSKDTHYSVAKIVKLLRIKSQLVESQPDGEMDYDDLINKIRTSGERHPIIFANIGTTVRGAVDNIAEIQKRIAALGIPREDYYLHADAALSGMILPFVEDPQPFTFADGIDSIGVSGHKMIGSPIPCGIVVAKKANVDRISVEIDYISAHDKTISGSRNGHTPLMMWAAVRSHTDAEWHRRIGHSLNMAKYAVDRFKAAGIDALCHKNSITVVFPKPSEWVWKKHCLATSGNVAHLITTAHHLDSSRIDALIDDVIADLAQRAA.

H120 is a binding site for substrate. Residue K233 is modified to N6-(pyridoxal phosphate)lysine.

This sequence belongs to the group II decarboxylase family. Homotetramer. It depends on pyridoxal 5'-phosphate as a cofactor.

The catalysed reaction is L-histidine + H(+) = histamine + CO2. This is Histidine decarboxylase (hdc) from Klebsiella aerogenes (Enterobacter aerogenes).